A 449-amino-acid polypeptide reads, in one-letter code: Serine/threonine-protein phosphatase 2A activator 2 (449 aa).

Disordered regions lie at residues 1–72 and 378–416; these read MDSS…DPST and MSEQ…PTGW. Pro residues predominate over residues 54-69; sequence NPTPVPETPALPPRPD. The segment covering 389–403 has biased composition (acidic residues); that stretch reads EENEEEGGEVEVYDD.

It belongs to the PTPA-type PPIase family.

It is found in the cytoplasm. The enzyme catalyses [protein]-peptidylproline (omega=180) = [protein]-peptidylproline (omega=0). In terms of biological role, PPIases accelerate the folding of proteins. It catalyzes the cis-trans isomerization of proline imidic peptide bonds in oligopeptides. Acts as a regulatory subunit for PP2A-like phosphatases modulating their activity or substrate specificity, probably by inducing a conformational change in the catalytic subunit, a direct target of the PPIase. Can reactivate inactive phosphatase PP2A-phosphatase methylesterase complexes (PP2Ai) in presence of ATP and Mg(2+) by dissociating the inactive form from the complex. This is Serine/threonine-protein phosphatase 2A activator 2 (rrd-2) from Neurospora crassa (strain ATCC 24698 / 74-OR23-1A / CBS 708.71 / DSM 1257 / FGSC 987).